A 248-amino-acid polypeptide reads, in one-letter code: Allergin-1 (248 aa).

The N-terminal stretch at 1–33 (MGDDDTPVCLSVASCKGVSCWLDKLLLWALTLS) is a signal peptide. The Extracellular portion of the chain corresponds to 34 to 150 (ITLRNTAVDC…DESCSSCLLS (117 aa)). Residues 54–137 (PNLNSSMSVV…SKYSQNFNFT (84 aa)) form the Ig-like C2-type domain. Asparagine 68 carries an N-linked (GlcNAc...) asparagine glycan. The cysteines at positions 73 and 120 are disulfide-linked. Asparagine 135 is a glycosylation site (N-linked (GlcNAc...) asparagine). The chain crosses the membrane as a helical span at residues 151–171 (LLLPGVLLGLILPGLAFLIYL). Residues 172-248 (KYKKGCTGKT…DDYIYSELTY (77 aa)) lie on the Cytoplasmic side of the membrane. Short sequence motifs (ITIM motif) lie at residues 216 to 221 (IHYTTP) and 241 to 246 (YIYSEL). Phosphotyrosine occurs at positions 218 and 243.

Monomer. Interacts (tyrosine-phosphorylated) with PTPN6, PTPN11 and INPP5D. In terms of processing, N-glycosylated. As to expression, mast cell-specific. Expressed in primary and transformed mast cells.

It localises to the cell membrane. Immunoglobulin-like receptor which plays an inhibitory role in degranulation of mast cells. Negatively regulates IgE-mediated mast cell activation and suppresses the type I immediate hypersensitivity reaction. The protein is Allergin-1 (Milr1) of Rattus norvegicus (Rat).